Reading from the N-terminus, the 253-residue chain is Large ribosomal subunit protein mL57 (253 aa).

The N-terminal 28 residues, 1–28 (MENSMMFISRSLRRPVTALNCNLQSVRT), are a transit peptide targeting the mitochondrion.

It belongs to the ribonuclease III family. Mitochondrion-specific ribosomal protein mL57 subfamily. As to quaternary structure, component of the mitochondrial large ribosomal subunit (mt-LSU). Mature yeast 74S mitochondrial ribosomes consist of a small (37S) and a large (54S) subunit. The 37S small subunit contains a 15S ribosomal RNA (15S mt-rRNA) and 34 different proteins. The 54S large subunit contains a 21S rRNA (21S mt-rRNA) and 46 different proteins. mL57 forms a heterodimer with mL44 and stabilizes rRNA expansion segments 1/2 at a membrane-facing protuberance close to the point of attachment of the ribosome to the translocon in the membrane.

It localises to the mitochondrion. Component of the mitochondrial ribosome (mitoribosome), a dedicated translation machinery responsible for the synthesis of mitochondrial genome-encoded proteins, including at least some of the essential transmembrane subunits of the mitochondrial respiratory chain. The mitoribosomes are attached to the mitochondrial inner membrane and translation products are cotranslationally integrated into the membrane. This Saccharomyces cerevisiae (strain ATCC 204508 / S288c) (Baker's yeast) protein is Large ribosomal subunit protein mL57 (MRPL15).